Here is a 404-residue protein sequence, read N- to C-terminus: Cytoplasmic tRNA 2-thiolation protein 2 (404 aa).

The protein belongs to the CTU2/NCS2 family.

Its subcellular location is the cytoplasm. It functions in the pathway tRNA modification; 5-methoxycarbonylmethyl-2-thiouridine-tRNA biosynthesis. In terms of biological role, plays a central role in 2-thiolation of mcm(5)S(2)U at tRNA wobble positions of tRNA(Lys), tRNA(Glu) and tRNA(Gln). May act by forming a heterodimer with NCS6/CTU1 that ligates sulfur from thiocarboxylated URM1 onto the uridine of tRNAs at wobble position. This Drosophila yakuba (Fruit fly) protein is Cytoplasmic tRNA 2-thiolation protein 2.